Here is a 278-residue protein sequence, read N- to C-terminus: 4-diphosphocytidyl-2-C-methyl-D-erythritol kinase (278 aa).

The active site involves K9. Residue 93–103 (PLGGGLGGGSS) participates in ATP binding. The active site involves D135.

Belongs to the GHMP kinase family. IspE subfamily.

The catalysed reaction is 4-CDP-2-C-methyl-D-erythritol + ATP = 4-CDP-2-C-methyl-D-erythritol 2-phosphate + ADP + H(+). Its pathway is isoprenoid biosynthesis; isopentenyl diphosphate biosynthesis via DXP pathway; isopentenyl diphosphate from 1-deoxy-D-xylulose 5-phosphate: step 3/6. Its function is as follows. Catalyzes the phosphorylation of the position 2 hydroxy group of 4-diphosphocytidyl-2C-methyl-D-erythritol. The sequence is that of 4-diphosphocytidyl-2-C-methyl-D-erythritol kinase from Nitrosomonas europaea (strain ATCC 19718 / CIP 103999 / KCTC 2705 / NBRC 14298).